Consider the following 177-residue polypeptide: Putative adenylate kinase (177 aa).

Gly-10, Gly-12, Lys-13, Thr-14, and Thr-15 together coordinate ATP. The segment at 30–50 is NMP; the sequence is SLRDYAIEKGIGEMKGDELEV. The interval 99–109 is LID; it reads ERGYSREKVGE. The ATP site is built by Arg-100 and Lys-138.

This sequence belongs to the adenylate kinase family. AK6 subfamily. In terms of assembly, interacts with uS11. Not a structural component of 40S pre-ribosomes, but transiently interacts with them by binding to uS11.

It catalyses the reaction AMP + ATP = 2 ADP. The enzyme catalyses ATP + H2O = ADP + phosphate + H(+). Its function is as follows. Broad-specificity nucleoside monophosphate (NMP) kinase that catalyzes the reversible transfer of the terminal phosphate group between nucleoside triphosphates and monophosphates. Also has ATPase activity. Involved in the late maturation steps of the 30S ribosomal particles, specifically 16S rRNA maturation. While NMP activity is not required for ribosome maturation, ATPase activity is. Associates transiently with small ribosomal subunit protein uS11. ATP hydrolysis breaks the interaction with uS11. May temporarily remove uS11 from the ribosome to enable a conformational change of the ribosomal RNA that is needed for the final maturation step of the small ribosomal subunit. The chain is Putative adenylate kinase from Thermococcus gammatolerans (strain DSM 15229 / JCM 11827 / EJ3).